A 30-amino-acid polypeptide reads, in one-letter code: Photosystem I reaction center subunit XII (30 aa).

The helical transmembrane segment at 7–29 (LIAFFLAFTAGILAIKLGQALYD) threads the bilayer.

Belongs to the PsaM family.

The protein resides in the plastid. It localises to the chloroplast thylakoid membrane. In Pinus thunbergii (Japanese black pine), this protein is Photosystem I reaction center subunit XII.